The chain runs to 316 residues: Phosphate acyltransferase (316 aa).

It belongs to the PlsX family. In terms of assembly, homodimer. Probably interacts with PlsY.

The protein localises to the cytoplasm. The catalysed reaction is a fatty acyl-[ACP] + phosphate = an acyl phosphate + holo-[ACP]. Its pathway is lipid metabolism; phospholipid metabolism. Functionally, catalyzes the reversible formation of acyl-phosphate (acyl-PO(4)) from acyl-[acyl-carrier-protein] (acyl-ACP). This enzyme utilizes acyl-ACP as fatty acyl donor, but not acyl-CoA. The sequence is that of Phosphate acyltransferase from Chlamydia abortus (strain DSM 27085 / S26/3) (Chlamydophila abortus).